Consider the following 392-residue polypeptide: Branched-chain-amino-acid aminotransferase, mitochondrial (392 aa).

A mitochondrion-targeting transit peptide spans 1 to 27 (MAAAALGQIWARKLLSVPWLLCGPRRY). Y168 serves as a coordination point for substrate. K229 carries the post-translational modification N6-(pyridoxal phosphate)lysine. K321 carries the post-translational modification N6-acetyllysine.

It belongs to the class-IV pyridoxal-phosphate-dependent aminotransferase family. Homodimer. It depends on pyridoxal 5'-phosphate as a cofactor. As to expression, ubiquitous.

It localises to the mitochondrion. It catalyses the reaction L-leucine + 2-oxoglutarate = 4-methyl-2-oxopentanoate + L-glutamate. The enzyme catalyses L-isoleucine + 2-oxoglutarate = (S)-3-methyl-2-oxopentanoate + L-glutamate. It carries out the reaction L-valine + 2-oxoglutarate = 3-methyl-2-oxobutanoate + L-glutamate. Functionally, catalyzes the first reaction in the catabolism of the essential branched chain amino acids leucine, isoleucine, and valine. May also function as a transporter of branched chain alpha-keto acids. The polypeptide is Branched-chain-amino-acid aminotransferase, mitochondrial (BCAT2) (Homo sapiens (Human)).